The sequence spans 475 residues: Glutamate--tRNA ligase (475 aa).

The short motif at P11–G21 is the 'HIGH' region element. Positions K240–R244 match the 'KMSKS' region motif. Position 243 (K243) interacts with ATP.

The protein belongs to the class-I aminoacyl-tRNA synthetase family. Glutamate--tRNA ligase type 1 subfamily. Monomer.

It is found in the cytoplasm. It carries out the reaction tRNA(Glu) + L-glutamate + ATP = L-glutamyl-tRNA(Glu) + AMP + diphosphate. Catalyzes the attachment of glutamate to tRNA(Glu) in a two-step reaction: glutamate is first activated by ATP to form Glu-AMP and then transferred to the acceptor end of tRNA(Glu). This Bradyrhizobium diazoefficiens (strain JCM 10833 / BCRC 13528 / IAM 13628 / NBRC 14792 / USDA 110) protein is Glutamate--tRNA ligase.